Reading from the N-terminus, the 397-residue chain is Mannitol-1-phosphate 5-dehydrogenase (397 aa).

9–20 is an NAD(+) binding site; it reads AVHFGAGNIGRG. Lys-220 is a catalytic residue.

Belongs to the mannitol dehydrogenase family. As to quaternary structure, monomer.

The catalysed reaction is D-mannitol 1-phosphate + NAD(+) = beta-D-fructose 6-phosphate + NADH + H(+). Catalyzes the NAD(H)-dependent interconversion of D-fructose 6-phosphate and D-mannitol 1-phosphate in the mannitol metabolic pathway. This chain is Mannitol-1-phosphate 5-dehydrogenase, found in Podospora anserina (strain S / ATCC MYA-4624 / DSM 980 / FGSC 10383) (Pleurage anserina).